The chain runs to 468 residues: MPITGTVLRRFITKGVIPMCQVAPLSTSAEGSTNLKEVLSKKIPAHNAKVKSFRAEHGNTVVQSVNIDMIYGGMRSMKGMVTETSVLDPEEGIRFRGYSIPECQKLLPKAKGGEEPLPEAIWWLLCTGDVPSEAQTAAITKEWNARADLPTHVVRMLDNFPDNLHPMAQFIAAIAALNNESKFAGAYARGVAKASYWEYAYEDSMDLLAKLPTVAAIIYRNLYRDGSAVSVIDPKKDWSANFSSMLGYDDPLFAELMRLYLVIHSDHEGGNVSAHTSHLVGSALSDPYLAFSAAMAGLAGPLHGLANQEVLVFLNKIVGEIGFNYTEEQLKEWVWKHLKSGQVVPGYGHAVLRKTDPRYECQREFALKHLPNDDLFKLVSTLYKITPGILLEQGKAKNPWPNVDSHSGVLLQYFGMTEMSFYTVLFGVSRALGCLSQLIWARGMGLPLERPKSHSTEGLIKLAMAAKK.

Active-site residues include H303, H349, and D404.

The protein belongs to the citrate synthase family. Homodimer.

The protein localises to the mitochondrion matrix. It catalyses the reaction oxaloacetate + acetyl-CoA + H2O = citrate + CoA + H(+). The protein operates within carbohydrate metabolism; tricarboxylic acid cycle; isocitrate from oxaloacetate: step 1/2. This Caenorhabditis briggsae protein is Probable citrate synthase, mitochondrial (cts-1).